A 102-amino-acid chain; its full sequence is Protein Tat (102 aa).

Positions 1 to 24 (MEPVDPRLEPWKHPGSQPKTACNN) are interaction with human CREBBP. The transactivation stretch occupies residues 1 to 48 (MEPVDPRLEPWKHPGSQPKTACNNCYCKKCCYHCQVCFLTKGLGISYG). Residues cysteine 22, cysteine 25, and cysteine 27 each coordinate Zn(2+). Residues 22–37 (CNNCYCKKCCYHCQVC) are cysteine-rich. Lysine 28 is modified (N6-acetyllysine; by host PCAF). Residues cysteine 30, histidine 33, cysteine 34, and cysteine 37 each contribute to the Zn(2+) site. Residues 38 to 48 (FLTKGLGISYG) are core. Positions 48–102 (GRKKRRQRRGPPQGSQTHQVSLSKQPTSQPRGDPTGPKESKEKVERETETDPAVQ) are disordered. The short motif at 49 to 57 (RKKRRQRRG) is the Nuclear localization signal, RNA-binding (TAR), and protein transduction element. An interaction with the host capping enzyme RNGTT region spans residues 49–86 (RKKRRQRRGPPQGSQTHQVSLSKQPTSQPRGDPTGPKE). N6-acetyllysine; by host EP300 and GCN5L2 occurs at positions 50 and 51. Asymmetric dimethylarginine; by host PRMT6 is present on residues arginine 52 and arginine 53. A compositionally biased stretch (polar residues) spans 62–77 (SQTHQVSLSKQPTSQP). Lysine 71 is covalently cross-linked (Glycyl lysine isopeptide (Lys-Gly) (interchain with G-Cter in ubiquitin)). Positions 78–80 (RGD) match the Cell attachment site motif. Positions 83–96 (GPKESKEKVERETE) are enriched in basic and acidic residues.

Belongs to the lentiviruses Tat family. As to quaternary structure, interacts with host CCNT1. Associates with the P-TEFb complex composed at least of Tat, P-TEFb (CDK9 and CCNT1), TAR RNA, RNA Pol II. Recruits the HATs CREBBP, TAF1/TFIID, EP300, PCAF and GCN5L2. Interacts with host KAT5/Tip60; this interaction targets the latter to degradation. Interacts with the host deacetylase SIRT1. Interacts with host capping enzyme RNGTT; this interaction stimulates RNGTT. Binds to host KDR, and to the host integrins ITGAV/ITGB3 and ITGA5/ITGB1. Interacts with host KPNB1/importin beta-1 without previous binding to KPNA1/importin alpha-1. Interacts with EIF2AK2. Interacts with host nucleosome assembly protein NAP1L1; this interaction may be required for the transport of Tat within the nucleus, since the two proteins interact at the nuclear rim. Interacts with host C1QBP/SF2P32; this interaction involves lysine-acetylated Tat. Interacts with the host chemokine receptors CCR2, CCR3 and CXCR4. Interacts with host DPP4/CD26; this interaction may trigger an anti-proliferative effect. Interacts with host LDLR. Interacts with the host extracellular matrix metalloproteinase MMP1. Interacts with host PRMT6; this interaction mediates Tat's methylation. Interacts with, and is ubiquitinated by MDM2/Hdm2. Interacts with host PSMC3 and HTATIP2. Interacts with STAB1; this interaction may overcome SATB1-mediated repression of IL2 and IL2RA (interleukin) in T cells by binding to the same domain than HDAC1. Interacts (when acetylated) with human CDK13, thereby increasing HIV-1 mRNA splicing and promoting the production of the doubly spliced HIV-1 protein Nef. Interacts with host TBP; this interaction modulates the activity of transcriptional pre-initiation complex. Interacts with host RELA. Interacts with host PLSCR1; this interaction negatively regulates Tat transactivation activity by altering its subcellular distribution. Post-translationally, asymmetrical arginine methylation by host PRMT6 seems to diminish the transactivation capacity of Tat and affects the interaction with host CCNT1. Acetylation by EP300, CREBBP, GCN5L2/GCN5 and PCAF regulates the transactivation activity of Tat. EP300-mediated acetylation of Lys-50 promotes dissociation of Tat from the TAR RNA through the competitive binding to PCAF's bromodomain. In addition, the non-acetylated Tat's N-terminus can also interact with PCAF. PCAF-mediated acetylation of Lys-28 enhances Tat's binding to CCNT1. Lys-50 is deacetylated by SIRT1. In terms of processing, polyubiquitination by host MDM2 does not target Tat to degradation, but activates its transactivation function and fosters interaction with CCNT1 and TAR RNA. Post-translationally, phosphorylated by EIF2AK2 on serine and threonine residues adjacent to the basic region important for TAR RNA binding and function. Phosphorylation of Tat by EIF2AK2 is dependent on the prior activation of EIF2AK2 by dsRNA.

Its subcellular location is the host nucleus. The protein resides in the host nucleolus. It localises to the host cytoplasm. The protein localises to the secreted. Functionally, transcriptional activator that increases RNA Pol II processivity, thereby increasing the level of full-length viral transcripts. Recognizes a hairpin structure at the 5'-LTR of the nascent viral mRNAs referred to as the transactivation responsive RNA element (TAR) and recruits the cyclin T1-CDK9 complex (P-TEFb complex) that will in turn hyperphosphorylate the RNA polymerase II to allow efficient elongation. The CDK9 component of P-TEFb and other Tat-activated kinases hyperphosphorylate the C-terminus of RNA Pol II that becomes stabilized and much more processive. Other factors such as HTATSF1/Tat-SF1, SUPT5H/SPT5, and HTATIP2 are also important for Tat's function. Besides its effect on RNA Pol II processivity, Tat induces chromatin remodeling of proviral genes by recruiting the histone acetyltransferases (HATs) CREBBP, EP300 and PCAF to the chromatin. This also contributes to the increase in proviral transcription rate, especially when the provirus integrates in transcriptionally silent region of the host genome. To ensure maximal activation of the LTR, Tat mediates nuclear translocation of NF-kappa-B by interacting with host RELA. Through its interaction with host TBP, Tat may also modulate transcription initiation. Tat can reactivate a latently infected cell by penetrating in it and transactivating its LTR promoter. In the cytoplasm, Tat is thought to act as a translational activator of HIV-1 mRNAs. In terms of biological role, extracellular circulating Tat can be endocytosed by surrounding uninfected cells via the binding to several surface receptors such as CD26, CXCR4, heparan sulfate proteoglycans (HSPG) or LDLR. Neurons are rarely infected, but they internalize Tat via their LDLR. Through its interaction with nuclear HATs, Tat is potentially able to control the acetylation-dependent cellular gene expression. Modulates the expression of many cellular genes involved in cell survival, proliferation or in coding for cytokines or cytokine receptors. Tat plays a role in T-cell and neurons apoptosis. Tat induced neurotoxicity and apoptosis probably contribute to neuroAIDS. Circulating Tat also acts as a chemokine-like and/or growth factor-like molecule that binds to specific receptors on the surface of the cells, affecting many cellular pathways. In the vascular system, Tat binds to ITGAV/ITGB3 and ITGA5/ITGB1 integrins dimers at the surface of endothelial cells and competes with bFGF for heparin-binding sites, leading to an excess of soluble bFGF. The polypeptide is Protein Tat (Human immunodeficiency virus type 1 group M subtype B (isolate RF/HAT3) (HIV-1)).